Consider the following 422-residue polypeptide: Dipeptidase aclJ (422 aa).

Residues 28–45 (LAYSVTLTLVALFFTFAL) form a helical membrane-spanning segment. Residues His-77 and Asp-79 each coordinate Zn(2+). A glycan (N-linked (GlcNAc...) asparagine) is linked at Asn-96. A disulfide bridge connects residues Cys-128 and Cys-219. Residue Glu-190 coordinates Zn(2+). His-217 serves as a coordination point for substrate. N-linked (GlcNAc...) asparagine glycosylation is present at Asn-270. A disulfide bridge connects residues Cys-287 and Cys-319. Positions 291 and 351 each coordinate substrate.

The protein belongs to the metallo-dependent hydrolases superfamily. Peptidase M19 family. Zn(2+) is required as a cofactor.

It localises to the membrane. The catalysed reaction is an L-aminoacyl-L-amino acid + H2O = 2 an L-alpha-amino acid. Its pathway is mycotoxin biosynthesis. Functionally, dipeptidase; part of the gene cluster that mediates the biosynthesis of aspirochlorine (or antibiotic A30641), an unusual halogenated spiro compound with distinctive antifungal properties due to selective inhibition of protein biosynthesis, and which is also active against bacteria, viruses, and murine tumor cells. The non-ribosomal peptide synthetase (NRPS) aclP is responsible the formation of the diketopiperazine (DKP) core from the condensation of 2 phenylalanine residues. One Phe residue is tailored into chlorotyrosine by hydroxylation and chlorination, whereas the second Phe undergoes an unprecedented C-C bond cleavage to be converted into glycine. After formation of the DKP, sulfur is incorporated into the DKP by conjugation with glutathione by aclG, followed by its stepwise degradation to the thiol by aclI, aclJ and aclK, and the dithiol oxidation by aclT. In addition, oxygenases (aclB, aclC, aclL and aclO) and O-methyltransferases (aclM and aclU) act as tailoring enzymes to produce the intermediate dechloroaspirochlorine. Ultimately, chlorination of dechloroaspirochlorine by the halogenase aclH is the last step in the aspirochlorine pathway. This chain is Dipeptidase aclJ, found in Aspergillus oryzae (strain ATCC 42149 / RIB 40) (Yellow koji mold).